We begin with the raw amino-acid sequence, 1822 residues long: Signal-induced proliferation-associated 1-like protein 1 (1822 aa).

Disordered stretches follow at residues Met1–His30 and Gly47–Asn125. The segment covering Pro84–Ser94 has biased composition (basic and acidic residues). Low complexity predominate over residues Arg95–Asn125. Phosphoserine occurs at positions 162, 187, 193, 208, 255, and 288. Positions Glu277–Arg297 are disordered. The 218-residue stretch at Phe638 to Leu855 folds into the Rap-GAP domain. One can recognise a PDZ domain in the interval Glu992–Asp1068. Phosphoserine occurs at positions 1117, 1126, 1155, 1166, 1188, 1209, and 1220. Residues Ala1134–Leu1165 form a disordered region. The interval Ser1183–Asp1252 is disordered. The span at Ser1188–Thr1198 shows a compositional bias: low complexity. Polar residues predominate over residues Asp1225 to Gln1244. A phosphoserine mark is found at Ser1273 and Ser1288. Residues His1286–Gly1324 form a disordered region. Over residues Ser1300 to Ala1315 the composition is skewed to low complexity. Position 1344 is a phosphoserine; by PLK2 (Ser1344). Thr1348 carries the phosphothreonine; by PLK2 modification. Residues Thr1358–Ser1367 are compositionally biased toward low complexity. Positions Thr1358–His1382 are disordered. At Ser1367 the chain carries Phosphoserine; by CDK5. Ser1384 bears the Phosphoserine mark. Over residues Leu1395–Glu1407 the composition is skewed to basic and acidic residues. Positions Leu1395 to Pro1493 are disordered. Residues Ser1408, Ser1409, Ser1430, Ser1449, and Ser1451 each carry the phosphoserine modification. A compositionally biased stretch (polar residues) spans Lys1417 to Asp1436. Composition is skewed to low complexity over residues Ala1437 to Ser1451 and Ser1471 to Ser1486. 2 positions are modified to phosphoserine: Ser1546 and Ser1567. The tract at residues Ser1567 to Arg1595 is disordered. Thr1569 carries the post-translational modification Phosphothreonine. 5 positions are modified to phosphoserine: Ser1572, Ser1583, Ser1586, Ser1603, and Ser1606. At Arg1619 the chain carries Asymmetric dimethylarginine. Ser1621, Ser1665, Ser1668, Ser1726, Ser1729, Ser1746, Ser1747, and Ser1752 each carry phosphoserine. Positions Pro1753–Glu1813 form a coiled coil.

Interacts (via PDZ domain) with EPHA4 (via PDZ motif); controls neuronal morphology through regulation of the RAP1 (RAP1A or RAP1B) and RAP2 (RAP2A, RAP2B or RAP2C) GTPases. Interacts with DLG4, PDLIM5, PDLIM7 and LZTS3. Interacts with the actin cytoskeleton. Post-translationally, ubiquitinated and degraded by the SCF(BTRC) following phosphorylation by PLK2. In terms of processing, phosphorylated at Ser-1367 by CDK5, creating a docking site for the POLO box domains of PLK2. Subsequently, PLK2 binds and phosphorylates SIPA1L1, leading to ubiquitination and degradation by the proteasome. In terms of tissue distribution, detected in brain (at protein level).

The protein resides in the cytoplasm. It localises to the cytoskeleton. It is found in the postsynaptic density. The protein localises to the synapse. Its subcellular location is the synaptosome. Stimulates the GTPase activity of RAP2A. Promotes reorganization of the actin cytoskeleton and recruits DLG4 to F-actin. Contributes to the regulation of dendritic spine morphogenesis. The protein is Signal-induced proliferation-associated 1-like protein 1 (Sipa1l1) of Rattus norvegicus (Rat).